Consider the following 588-residue polypeptide: DNA mismatch repair protein MutL (588 aa).

It belongs to the DNA mismatch repair MutL/HexB family.

Its function is as follows. This protein is involved in the repair of mismatches in DNA. It is required for dam-dependent methyl-directed DNA mismatch repair. May act as a 'molecular matchmaker', a protein that promotes the formation of a stable complex between two or more DNA-binding proteins in an ATP-dependent manner without itself being part of a final effector complex. The chain is DNA mismatch repair protein MutL from Fervidobacterium nodosum (strain ATCC 35602 / DSM 5306 / Rt17-B1).